Here is a 470-residue protein sequence, read N- to C-terminus: TNF receptor-associated factor 4 (470 aa).

The segment at 18–58 adopts an RING-type zinc-finger fold; the sequence is CPLCGKPMREPVQVSTCGHRFCDTCLQEFLSEGVFKCPEDQ. TRAF-type zinc fingers lie at residues 102 to 154, 155 to 208, and 209 to 266; these read HLNT…EAYE, SHEG…DTIQ, and SHQY…KLAM. A Glycyl lysine isopeptide (Lys-Gly) (interchain with G-Cter in ubiquitin) cross-link involves residue K263. A coiled-coil region spans residues 277–309; sequence HLAMMCALVSRQRQELQELRRELEELSVGSDGV. The MATH domain occupies 307–462; that stretch reads DGVLIWKIGS…DDAVFIRAAV (156 aa). Phosphoserine is present on S426.

Belongs to the TNF receptor-associated factor family. B subfamily. In terms of assembly, homotrimer. Interacts with LTBR/TNFRSF3, NGFR/TNFRSF16, RPS6KB1 and TGFB1I1. Interacts with SMURF1. Interacts (via TRAF domain) with MAP3K4 (via kinase domain). Interacts with NCF1, TICAM1, IRAK1 and TRAF6, and is probably part of a complex containing TRAF4, NCF1, TICAM1, IRAK1 and TRAF6. Interacts (via MATH domain) with GP6 and GP1BB. Interacts with EGFR (via C-terminal region); this interaction promotes the formation of EGFR asymmetric dimers. Interacts with PKM; this interaction promotes PKM kinase activity. Polyubiquitinated, leading to its proteasomal degradation. Ubiquitinated at Lys-263 by the SCF(FBXL2) complex, leading to its degradation by the proteasome. Expressed in epithelial cells of thymus, dendritic cells of lymph node, and in the basal cell layer of epithelia such as epidermis, nasopharynx, respiratory tract, salivary gland, and esophagus.

Its subcellular location is the cytoplasm. The protein resides in the nucleus. It localises to the perinuclear region. The protein localises to the cell junction. It is found in the tight junction. Its subcellular location is the cell membrane. The protein resides in the cytoskeleton. The enzyme catalyses S-ubiquitinyl-[E2 ubiquitin-conjugating enzyme]-L-cysteine + [acceptor protein]-L-lysine = [E2 ubiquitin-conjugating enzyme]-L-cysteine + N(6)-ubiquitinyl-[acceptor protein]-L-lysine.. It participates in protein degradation; proteasomal ubiquitin-dependent pathway. In terms of biological role, adapter protein with E3 ligase activity that is involved in many diverse biological processes including cell proliferation, migration, differentiation, DNA repair, platelet activation or apoptosis. Promotes EGFR-mediated signaling by facilitating the dimerization of EGFR and downstream AKT activation thereby promoting cell proliferation. Ubiquitinates SMURF2 through 'Lys-48'-linked ubiquitin chain leading to SMURF2 degradation through the proteasome and subsequently osteogenic differentiation. Promotes 'Lys-63'-mediated ubiquitination of CHK1 which in turn activates cell cycle arrest and activation of DNA repair. In addition, promotes an atypical 'Lys-29'-linked ubiquitination at the C-terminal end of IRS1 which is crucial for insulin-like growth factor (IGF) signal transduction. Regulates activation of NF-kappa-B in response to signaling through Toll-like receptors. Required for normal skeleton development, and for normal development of the respiratory tract. Required for activation of RPS6KB1 in response to TNF signaling. Modulates TRAF6 functions. Inhibits adipogenic differentiation by activating pyruvate kinase PKM activity and subsequently the beta-catenin signaling pathway. This chain is TNF receptor-associated factor 4 (TRAF4), found in Homo sapiens (Human).